The primary structure comprises 425 residues: Interferon regulatory factor 8 (425 aa).

The segment at residues 7–114 (GRRLRQWLIE…EPYKVYRIVP (108 aa)) is a DNA-binding region (IRF tryptophan pentad repeat).

Belongs to the IRF family.

The protein localises to the nucleus. It is found in the cytoplasm. Plays a role as a transcriptional activator or repressor. Specifically binds to the upstream regulatory region of type I IFN and IFN-inducible MHC class I genes (the interferon consensus sequence (ICS)). Plays a regulatory role in cells of the immune system. The sequence is that of Interferon regulatory factor 8 (IRF8) from Gallus gallus (Chicken).